The following is a 372-amino-acid chain: Alanine dehydrogenase 1 (372 aa).

The active site involves His-94. 170 to 200 (TYVIFGGGVAATNAANVALGLNAKVIIIELN) is a binding site for NAD(+).

This sequence belongs to the AlaDH/PNT family.

The catalysed reaction is L-alanine + NAD(+) + H2O = pyruvate + NH4(+) + NADH + H(+). The protein operates within amino-acid degradation; L-alanine degradation via dehydrogenase pathway; NH(3) and pyruvate from L-alanine: step 1/1. May play a role in cell wall synthesis as L-alanine is an important constituent of the peptidoglycan layer. This chain is Alanine dehydrogenase 1 (ald1), found in Staphylococcus aureus (strain MSSA476).